Here is a 380-residue protein sequence, read N- to C-terminus: tRNA (guanine(26)-N(2))-dimethyltransferase (380 aa).

A Trm1 methyltransferase domain is found at 2–374; the sequence is ITVNEGSVTI…AGIGEIEEVL (373 aa). 5 residues coordinate S-adenosyl-L-methionine: arginine 35, arginine 65, aspartate 83, aspartate 109, and alanine 110. The Zn(2+) site is built by cysteine 242, cysteine 245, cysteine 261, and cysteine 264.

Belongs to the class I-like SAM-binding methyltransferase superfamily. Trm1 family.

It catalyses the reaction guanosine(26) in tRNA + 2 S-adenosyl-L-methionine = N(2)-dimethylguanosine(26) in tRNA + 2 S-adenosyl-L-homocysteine + 2 H(+). Its function is as follows. Dimethylates a single guanine residue at position 26 of a number of tRNAs using S-adenosyl-L-methionine as donor of the methyl groups. The chain is tRNA (guanine(26)-N(2))-dimethyltransferase from Methanothermobacter thermautotrophicus (strain ATCC 29096 / DSM 1053 / JCM 10044 / NBRC 100330 / Delta H) (Methanobacterium thermoautotrophicum).